A 430-amino-acid polypeptide reads, in one-letter code: tRNA(Ile)-lysidine synthase (430 aa).

27 to 32 (SGGSDS) provides a ligand contact to ATP.

The protein belongs to the tRNA(Ile)-lysidine synthase family.

It localises to the cytoplasm. It carries out the reaction cytidine(34) in tRNA(Ile2) + L-lysine + ATP = lysidine(34) in tRNA(Ile2) + AMP + diphosphate + H(+). In terms of biological role, ligates lysine onto the cytidine present at position 34 of the AUA codon-specific tRNA(Ile) that contains the anticodon CAU, in an ATP-dependent manner. Cytidine is converted to lysidine, thus changing the amino acid specificity of the tRNA from methionine to isoleucine. This Rickettsia prowazekii (strain Madrid E) protein is tRNA(Ile)-lysidine synthase.